Consider the following 441-residue polypeptide: Amino-acid acetyltransferase (441 aa).

Positions 295–434 constitute an N-acetyltransferase domain; that stretch reads EQVRRATIND…QALYNYQRRS (140 aa).

This sequence belongs to the acetyltransferase family. ArgA subfamily. In terms of assembly, homohexamer.

The protein resides in the cytoplasm. It catalyses the reaction L-glutamate + acetyl-CoA = N-acetyl-L-glutamate + CoA + H(+). Its pathway is amino-acid biosynthesis; L-arginine biosynthesis; N(2)-acetyl-L-ornithine from L-glutamate: step 1/4. The polypeptide is Amino-acid acetyltransferase (Pectobacterium carotovorum subsp. carotovorum (strain PC1)).